The following is a 586-amino-acid chain: Aspartate--tRNA ligase (586 aa).

Glutamate 171 serves as a coordination point for L-aspartate. Residues 195 to 198 (QLFK) are aspartate. Arginine 217 serves as a coordination point for L-aspartate. ATP-binding positions include 217–219 (RDE) and glutamine 226. Histidine 448 is a binding site for L-aspartate. Glutamate 482 provides a ligand contact to ATP. Arginine 489 is an L-aspartate binding site. Residue 534–537 (GLDR) coordinates ATP.

It belongs to the class-II aminoacyl-tRNA synthetase family. Type 1 subfamily. Homodimer.

It is found in the cytoplasm. It catalyses the reaction tRNA(Asp) + L-aspartate + ATP = L-aspartyl-tRNA(Asp) + AMP + diphosphate. Its function is as follows. Catalyzes the attachment of L-aspartate to tRNA(Asp) in a two-step reaction: L-aspartate is first activated by ATP to form Asp-AMP and then transferred to the acceptor end of tRNA(Asp). The sequence is that of Aspartate--tRNA ligase from Buchnera aphidicola subsp. Acyrthosiphon pisum (strain APS) (Acyrthosiphon pisum symbiotic bacterium).